The primary structure comprises 659 residues: MFKPEKIVKIEVITLTRFRDTLLTYLHEIGVAQLEEVPIKEVQRDTPNEFYRKATSYSITLSRLVDTLKQYLPPKKGGFKEFMFPQEKPKKKYKYKGIEALIKDVETFLERVEPEIRSLESEVSRINNEISSLEDTLESLQILSNLNVEVEYLRGGSFLNVDVGLVDREKAEPLIKEISDVVEGRVHIVRKDIGARTLLVVVSLREDSSKVSSVLAKYGFEKIEVPEGKGLPRDLIPIYTEKIKEKEKELEEVKSRGRKVAERYYDELVFYKELMDNEREKGNYLSYLVRTEMTFGLLAWVPEKDVEKVVEGIKKITGGVAYINISEPSKEEIDNVPVKLKNPEFLSHFEMLTEMYGVPKYNEIDPTPIMAFTYSFFFGFMLTDFVYGLLLGIISALLVKGHSKLKDGTWKFAKIMLWSSVFTMTLGILFGSYCGNALDMAGIKVPRILDPMEQALTVLMIALAIGLAHLFTGYLLGFIVRWKNGDKKGAIFEQLSWLLIIIGITLFALSSRLGVPDLIVKGIFGIGLILFMIGEVLANKGMAVLLVISDFFGFVGNWLSYARLMALALATSGIALVINILVEMIWGIKIASVPLGALIGILVLIGGHIFSTAINALGAFVHALRLHYVEFFGTFYSGEGRKFEPFAAKREVSELEIET.

8 consecutive transmembrane segments (helical) span residues 376–396, 415–435, 460–480, 489–509, 518–538, 542–562, 568–588, and 590–610; these read FFFGFMLTDFVYGLLLGIISA, IMLWSSVFTMTLGILFGSYCG, MIALAIGLAHLFTGYLLGFIV, GAIFEQLSWLLIIIGITLFAL, LIVKGIFGIGLILFMIGEVLA, MAVLLVISDFFGFVGNWLSYA, ALATSGIALVINILVEMIWGI, and IASVPLGALIGILVLIGGHIF.

This sequence belongs to the V-ATPase 116 kDa subunit family. As to quaternary structure, has multiple subunits with at least A(3), B(3), C, D, E, F, H, I and proteolipid K(x).

Its subcellular location is the cell membrane. In terms of biological role, component of the A-type ATP synthase that produces ATP from ADP in the presence of a proton gradient across the membrane. The protein is A-type ATP synthase subunit I of Pyrococcus horikoshii (strain ATCC 700860 / DSM 12428 / JCM 9974 / NBRC 100139 / OT-3).